A 105-amino-acid chain; its full sequence is Large ribosomal subunit protein uL24 (105 aa).

The protein belongs to the universal ribosomal protein uL24 family. As to quaternary structure, part of the 50S ribosomal subunit.

In terms of biological role, one of two assembly initiator proteins, it binds directly to the 5'-end of the 23S rRNA, where it nucleates assembly of the 50S subunit. Functionally, one of the proteins that surrounds the polypeptide exit tunnel on the outside of the subunit. The chain is Large ribosomal subunit protein uL24 from Clostridium botulinum (strain 657 / Type Ba4).